The following is a 555-amino-acid chain: Protein NRT1/ PTR FAMILY 5.12 (555 aa).

A run of 2 helical transmembrane segments spans residues 53–73 and 83–103; these read FAYF…LGES and LWLG…DSFL. Thr108 bears the Phosphothreonine mark. Helical transmembrane passes span 109-129, 148-168, 190-210, 221-241, 315-335, 357-377, 401-421, 443-463, 482-502, and 526-546; these read ILLT…SATI, VIIF…FKVC, SYFN…RLVT, LGYA…LLGI, AVLS…VFAQ, VPAA…IPIY, ISTG…VEMK, VCWL…TMVG, ALYL…VSVI, and YFYW…VYFA.

It belongs to the major facilitator superfamily. Proton-dependent oligopeptide transporter (POT/PTR) (TC 2.A.17) family. As to expression, expressed in shoots and roots.

It is found in the membrane. This Arabidopsis thaliana (Mouse-ear cress) protein is Protein NRT1/ PTR FAMILY 5.12 (NPF5.12).